The chain runs to 122 residues: Small ribosomal subunit protein bS6 (122 aa).

Positions 95–122 are disordered; sequence AETAPSPMMKEVQREEAKKAAAQSEQAA.

It belongs to the bacterial ribosomal protein bS6 family.

Binds together with bS18 to 16S ribosomal RNA. The polypeptide is Small ribosomal subunit protein bS6 (Ralstonia nicotianae (strain ATCC BAA-1114 / GMI1000) (Ralstonia solanacearum)).